Reading from the N-terminus, the 73-residue chain is Putative neurotoxin NaH-Cpp1a (73 aa).

The first 23 residues, 1–23, serve as a signal peptide directing secretion; the sequence is MKSFYGILCVAVLMMFHLEMSES. Disulfide bonds link cysteine 43–cysteine 58, cysteine 50–cysteine 63, and cysteine 57–cysteine 70.

In terms of tissue distribution, expressed outside of acontia.

The protein localises to the secreted. It is found in the nematocyst. Putative neurotoxin. In Calliactis polypus (Hermit crab anemone), this protein is Putative neurotoxin NaH-Cpp1a.